The sequence spans 385 residues: Succinate--CoA ligase [ADP-forming] subunit beta (385 aa).

One can recognise an ATP-grasp domain in the interval 9 to 243 (KEILSAYGIP…YSQLDTLEIN (235 aa)). ATP-binding positions include K45, 52 to 54 (GRG), E98, V101, and E106. The Mg(2+) site is built by N198 and D212. Substrate-binding positions include N263 and 320–322 (GIM).

The protein belongs to the succinate/malate CoA ligase beta subunit family. Heterotetramer of two alpha and two beta subunits. Mg(2+) serves as cofactor.

The enzyme catalyses succinate + ATP + CoA = succinyl-CoA + ADP + phosphate. The catalysed reaction is GTP + succinate + CoA = succinyl-CoA + GDP + phosphate. It participates in carbohydrate metabolism; tricarboxylic acid cycle; succinate from succinyl-CoA (ligase route): step 1/1. Its function is as follows. Succinyl-CoA synthetase functions in the citric acid cycle (TCA), coupling the hydrolysis of succinyl-CoA to the synthesis of either ATP or GTP and thus represents the only step of substrate-level phosphorylation in the TCA. The beta subunit provides nucleotide specificity of the enzyme and binds the substrate succinate, while the binding sites for coenzyme A and phosphate are found in the alpha subunit. The chain is Succinate--CoA ligase [ADP-forming] subunit beta from Geobacter sulfurreducens (strain ATCC 51573 / DSM 12127 / PCA).